The following is a 433-amino-acid chain: Enolase (433 aa).

Residue Gln164 participates in (2R)-2-phosphoglycerate binding. The Proton donor role is filled by Glu206. Mg(2+) is bound by residues Asp243, Glu289, and Asp316. The (2R)-2-phosphoglycerate site is built by Lys341, Arg370, Ser371, and Lys392. Lys341 serves as the catalytic Proton acceptor.

This sequence belongs to the enolase family. Mg(2+) is required as a cofactor.

It localises to the cytoplasm. It is found in the secreted. The protein localises to the cell surface. It carries out the reaction (2R)-2-phosphoglycerate = phosphoenolpyruvate + H2O. It functions in the pathway carbohydrate degradation; glycolysis; pyruvate from D-glyceraldehyde 3-phosphate: step 4/5. In terms of biological role, catalyzes the reversible conversion of 2-phosphoglycerate (2-PG) into phosphoenolpyruvate (PEP). It is essential for the degradation of carbohydrates via glycolysis. The chain is Enolase from Borreliella burgdorferi (strain ATCC 35210 / DSM 4680 / CIP 102532 / B31) (Borrelia burgdorferi).